The primary structure comprises 106 residues: UPF0145 protein APJL_0492 (106 aa).

It belongs to the UPF0145 family.

The sequence is that of UPF0145 protein APJL_0492 from Actinobacillus pleuropneumoniae serotype 3 (strain JL03).